A 519-amino-acid chain; its full sequence is U3 small nucleolar RNA-associated protein 15 homolog (519 aa).

Alanine 2 carries the N-acetylalanine modification. WD repeat units follow at residues 36–75, 78–117, 120–159, 162–202, 204–242, 246–285, and 287–326; these read KEFG…PIKT, RFKD…PLRQ, GHTK…EILT, EHSD…SVIS, EHGQ…QLLV, NHHK…VVHS, and DYTA…KKDS. Lysine 249 is covalently cross-linked (Glycyl lysine isopeptide (Lys-Gly) (interchain with G-Cter in SUMO2)).

As to quaternary structure, part of the small subunit (SSU) processome, composed of more than 70 proteins and the RNA chaperone small nucleolar RNA (snoRNA) U3. May be a component of the proposed t-UTP subcomplex of the ribosomal small subunit (SSU) processome containing at least UTP4, WDR43, HEATR1, UTP15, WDR75. Interacts directly with UTP4 and WDR43.

It localises to the nucleus. Its subcellular location is the nucleolus. Its function is as follows. Ribosome biogenesis factor. Involved in nucleolar processing of pre-18S ribosomal RNA. Required for optimal pre-ribosomal RNA transcription by RNA polymerase I. Part of the small subunit (SSU) processome, first precursor of the small eukaryotic ribosomal subunit. During the assembly of the SSU processome in the nucleolus, many ribosome biogenesis factors, an RNA chaperone and ribosomal proteins associate with the nascent pre-rRNA and work in concert to generate RNA folding, modifications, rearrangements and cleavage as well as targeted degradation of pre-ribosomal RNA by the RNA exosome. This is U3 small nucleolar RNA-associated protein 15 homolog from Bos taurus (Bovine).